The sequence spans 275 residues: U6 snRNA phosphodiesterase 1 (275 aa).

The tract at residues 1–25 (MEFLKHYEDDEDQDDENNTKDENVN) is disordered. Residue H122 is the Proton acceptor of the active site. Residues 122–124 (HIS), Y206, and 208–214 (NPEPHLS) contribute to the AMP site. Residues Y206 and 210-214 (EPHLS) contribute to the UMP site. H212 functions as the Proton donor in the catalytic mechanism.

The protein belongs to the 2H phosphoesterase superfamily. USB1 family.

The protein resides in the nucleus. The enzyme catalyses a 3'-end uridylyl-uridine-RNA = a 3'-end 2',3'-cyclophospho-uridine-RNA + uridine. Its function is as follows. 3'-5' RNA exonuclease that trims the 3' end of oligo(U) tracts of the pre-U6 small nuclear RNA (snRNA) molecule, leading to the formation of a mature U6 snRNA 3' end-terminated with a 2',3'-cyclic phosphate. Participates in the U6 snRNA 3' end processing that prevents U6 snRNA degradation. In Dictyostelium discoideum (Social amoeba), this protein is U6 snRNA phosphodiesterase 1.